The primary structure comprises 169 residues: uncharacterized protein (169 aa).

The Nudix hydrolase domain maps to 28–157 (ELHLVIHVCI…EFIPYFFLNQ (130 aa)). A Nudix box motif is present at residues 65–87 (AGSALKGETSQQAAEREVQEELG). The Mg(2+) site is built by Glu81 and Glu85.

It belongs to the Nudix hydrolase family. It depends on Mg(2+) as a cofactor.

This is an uncharacterized protein from Listeria monocytogenes serovar 1/2a (strain ATCC BAA-679 / EGD-e).